We begin with the raw amino-acid sequence, 186 residues long: UPF0398 protein LBUL_0921 (186 aa).

This sequence belongs to the UPF0398 family.

The polypeptide is UPF0398 protein LBUL_0921 (Lactobacillus delbrueckii subsp. bulgaricus (strain ATCC BAA-365 / Lb-18)).